The chain runs to 379 residues: MSELSFDAPVWHHGKALRKGYTTGSCATAAAKVAALMVLRQHLIHQVSIVTPSGVTLCLNVESPHIEGQQAIAAIRKDGGDDVDATHGMLIFARVTLNDSGEITLTGGEGIGTVTRKGVGLPLGSAAINRTPRHTIESAVREAIGPARGADVEIFAPEGEARAQKTYNSRLGILGGISIIGTTGIVTPMSEESWKRSLSLELEIKRASGLTRVILVPGNHGERFVREQMGVDTQAVVTMSNFVGYMIEEAVRLGFCQIVLVGHPGKLIKIAAGIFHTHSHIADARMETLVAHLALLGAPLELLTLVGDCDTTEAAMEHIEAYGFGHIYNHLARRICLRVMQMLRFTKTPPVCDAILFSFDNHILGSNRPVDEIAKELQC.

This sequence belongs to the CbiD family.

The catalysed reaction is Co-precorrin-5B + S-adenosyl-L-methionine = Co-precorrin-6A + S-adenosyl-L-homocysteine. It participates in cofactor biosynthesis; adenosylcobalamin biosynthesis; cob(II)yrinate a,c-diamide from sirohydrochlorin (anaerobic route): step 6/10. Its function is as follows. Catalyzes the methylation of C-1 in cobalt-precorrin-5B to form cobalt-precorrin-6A. In Salmonella choleraesuis (strain SC-B67), this protein is Cobalt-precorrin-5B C(1)-methyltransferase.